A 214-amino-acid chain; its full sequence is Leucyl/phenylalanyl-tRNA--protein transferase (214 aa).

It belongs to the L/F-transferase family.

Its subcellular location is the cytoplasm. It carries out the reaction N-terminal L-lysyl-[protein] + L-leucyl-tRNA(Leu) = N-terminal L-leucyl-L-lysyl-[protein] + tRNA(Leu) + H(+). It catalyses the reaction N-terminal L-arginyl-[protein] + L-leucyl-tRNA(Leu) = N-terminal L-leucyl-L-arginyl-[protein] + tRNA(Leu) + H(+). The catalysed reaction is L-phenylalanyl-tRNA(Phe) + an N-terminal L-alpha-aminoacyl-[protein] = an N-terminal L-phenylalanyl-L-alpha-aminoacyl-[protein] + tRNA(Phe). Functions in the N-end rule pathway of protein degradation where it conjugates Leu, Phe and, less efficiently, Met from aminoacyl-tRNAs to the N-termini of proteins containing an N-terminal arginine or lysine. This Cereibacter sphaeroides (strain KD131 / KCTC 12085) (Rhodobacter sphaeroides) protein is Leucyl/phenylalanyl-tRNA--protein transferase.